A 1366-amino-acid polypeptide reads, in one-letter code: DNA-directed RNA polymerase subunit beta' (1366 aa).

Residues 1–40 (MTSTSPKSRRSSGKGRKGSKKKGKQVSQIPPLSKTPPSFR) form a disordered region. A compositionally biased stretch (basic residues) spans 7 to 24 (KSRRSSGKGRKGSKKKGK). Over residues 25–38 (QVSQIPPLSKTPPS) the composition is skewed to polar residues. Zn(2+)-binding residues include Cys-250, Cys-317, Cys-324, and Cys-327. Residues 1299–1366 (TAAKSTSVLD…LQEEGLLADE (68 aa)) are disordered. The span at 1353–1366 (ALEGLQEEGLLADE) shows a compositional bias: low complexity.

Belongs to the RNA polymerase beta' chain family. RpoC2 subfamily. In cyanobacteria the RNAP catalytic core is composed of 2 alpha, 1 beta, 1 beta', 1 gamma and 1 omega subunit. When a sigma factor is associated with the core the holoenzyme is formed, which can initiate transcription. It depends on Zn(2+) as a cofactor.

The catalysed reaction is RNA(n) + a ribonucleoside 5'-triphosphate = RNA(n+1) + diphosphate. Its function is as follows. DNA-dependent RNA polymerase catalyzes the transcription of DNA into RNA using the four ribonucleoside triphosphates as substrates. In Prochlorococcus marinus (strain MIT 9211), this protein is DNA-directed RNA polymerase subunit beta'.